Here is a 948-residue protein sequence, read N- to C-terminus: ELKS/Rab6-interacting/CAST family member 1 (948 aa).

The disordered stretch occupies residues 1–54 (MYGSARSVGKVEPSSQSPGRSPRLPRSPRLGHRRTNSTGGSSGNSVGGGSGKTL). Lys10 bears the N6-acetyllysine mark. Low complexity predominate over residues 13–28 (PSSQSPGRSPRLPRSP). Residues Ser17, Ser21, and Ser37 each carry the phosphoserine modification. Thr38 is subject to Phosphothreonine. Positions 40–51 (GSSGNSVGGGSG) are enriched in gly residues. A phosphoserine mark is found at Ser55, Ser75, Ser94, Ser796, and Ser937. A coiled-coil region spans residues 144 to 920 (RQARDNTIMD…RMKLMADNYE (777 aa)). Residues 773-796 (KHKEQVEKKKSAQMLEEARRREDS) are compositionally biased toward basic and acidic residues. 2 disordered regions span residues 773–801 (KHKEQVEKKKSAQMLEEARRREDSLSDSS) and 903–948 (QLKQ…GIWA). Positions 939–948 (DQDEEEGIWA) are enriched in acidic residues.

In terms of assembly, interacts with the GTB-bound forms of RAB6A isoform 1 and isoform 2 and with RAB6B. The interaction was strongest with RAB6B, followed by RAB6A isoform 2 and weakest with RAB6A isoform 1. Part of a complex with CHUK, IKBKB and IKBKG. Interacts with CHUK, IKBKB and IKBKG. The interaction with IKBKG is independent of CHUK and IKBKB. Interacts with NFKBIA. Isoform 1 interacts through its C-terminus with the PDZ domains of RIMS1 and RIMS2. Interacts with ERC2/CAST1. Interacts with SDCCAG8. Part of a cortical microtubule stabilization complex (CMSC) composed of KANK1, PPFIA1, PPFIBP1, ERC1/ELKS, PHLDB2/LL5beta, CLASPs, KIF21A and possibly additional interactors; within CMSCs KANK1 and PHLDB2/LL5beta appear to be the core components for targeting of microtubule-binding proteins KIF21A and CLASPs, whereas PPFIA1, PPFIBP1 and ERC1/ELKS serve as scaffolds for protein clustering. In terms of tissue distribution, isoform 1 is specifically expressed in brain. A further probable isoform is widely expressed outside of brain It is referred to as ERC1a by PubMed:12391317 and characterized by a C-terminus identical to that of isoforms 1 in human and mouse.

The protein resides in the cytoplasm. It is found in the cytoskeleton. The protein localises to the microtubule organizing center. Its subcellular location is the centrosome. It localises to the membrane. The protein resides in the golgi apparatus membrane. It is found in the presynaptic active zone. The protein localises to the cell projection. Its subcellular location is the podosome. In terms of biological role, regulatory subunit of the IKK complex. Probably recruits IkappaBalpha/NFKBIA to the complex. May be involved in the organization of the cytomatrix at the nerve terminals active zone (CAZ) which regulates neurotransmitter release. May be involved in vesicle trafficking at the CAZ. May be involved in Rab-6 regulated endosomes to Golgi transport. This Rattus norvegicus (Rat) protein is ELKS/Rab6-interacting/CAST family member 1 (Erc1).